Reading from the N-terminus, the 67-residue chain is Probable Sec-independent protein translocase protein TatE (67 aa).

Residues 4-21 (ISITKLLVVAALIVLVFG) form a helical membrane-spanning segment. The interval 43–67 (MNDDDTSVKKSAEEDVPADKISHKE) is disordered.

It belongs to the TatA/E family. TatE subfamily.

It is found in the cell inner membrane. Its function is as follows. Part of the twin-arginine translocation (Tat) system that transports large folded proteins containing a characteristic twin-arginine motif in their signal peptide across membranes. TatE shares overlapping functions with TatA. This chain is Probable Sec-independent protein translocase protein TatE, found in Enterobacter lignolyticus (strain SCF1).